The primary structure comprises 313 residues: Solute carrier family 35 member E3 (313 aa).

The next 10 helical transmembrane spans lie at isoleucine 14–tryptophan 34, glycine 40–isoleucine 60, isoleucine 77–serine 97, isoleucine 100–tyrosine 122, isoleucine 130–tyrosine 146, leucine 153–valine 173, leucine 187–glutamate 207, isoleucine 215–phenylalanine 235, threonine 252–phenylalanine 272, and proline 275–threonine 295.

It belongs to the TPT transporter family. SLC35E subfamily.

It localises to the membrane. Putative transporter. This Danio rerio (Zebrafish) protein is Solute carrier family 35 member E3 (slc35e3).